A 294-amino-acid polypeptide reads, in one-letter code: 4-hydroxy-tetrahydrodipicolinate synthase (294 aa).

Thr-45 is a pyruvate binding site. The active-site Proton donor/acceptor is the Tyr-133. Residue Lys-161 is the Schiff-base intermediate with substrate of the active site. Ile-203 provides a ligand contact to pyruvate.

Belongs to the DapA family. Homotetramer; dimer of dimers.

The protein resides in the cytoplasm. The catalysed reaction is L-aspartate 4-semialdehyde + pyruvate = (2S,4S)-4-hydroxy-2,3,4,5-tetrahydrodipicolinate + H2O + H(+). Its pathway is amino-acid biosynthesis; L-lysine biosynthesis via DAP pathway; (S)-tetrahydrodipicolinate from L-aspartate: step 3/4. Its function is as follows. Catalyzes the condensation of (S)-aspartate-beta-semialdehyde [(S)-ASA] and pyruvate to 4-hydroxy-tetrahydrodipicolinate (HTPA). The polypeptide is 4-hydroxy-tetrahydrodipicolinate synthase (Shewanella sp. (strain ANA-3)).